A 48-amino-acid polypeptide reads, in one-letter code: Small, acid-soluble spore protein O (48 aa).

The disordered stretch occupies residues 1 to 23 (MVKRKANHVINGMNDAKSQGKGA).

The protein belongs to the SspO family.

Its subcellular location is the spore core. The sequence is that of Small, acid-soluble spore protein O from Bacillus velezensis (strain DSM 23117 / BGSC 10A6 / LMG 26770 / FZB42) (Bacillus amyloliquefaciens subsp. plantarum).